Here is a 233-residue protein sequence, read N- to C-terminus: 2-C-methyl-D-erythritol 4-phosphate cytidylyltransferase (233 aa).

The protein belongs to the IspD/TarI cytidylyltransferase family. IspD subfamily.

It carries out the reaction 2-C-methyl-D-erythritol 4-phosphate + CTP + H(+) = 4-CDP-2-C-methyl-D-erythritol + diphosphate. The protein operates within isoprenoid biosynthesis; isopentenyl diphosphate biosynthesis via DXP pathway; isopentenyl diphosphate from 1-deoxy-D-xylulose 5-phosphate: step 2/6. Its function is as follows. Catalyzes the formation of 4-diphosphocytidyl-2-C-methyl-D-erythritol from CTP and 2-C-methyl-D-erythritol 4-phosphate (MEP). This is 2-C-methyl-D-erythritol 4-phosphate cytidylyltransferase from Gloeobacter violaceus (strain ATCC 29082 / PCC 7421).